The primary structure comprises 67 residues: Conotoxin Cl14.2b (67 aa).

The signal sequence occupies residues 1 to 20 (MNVTVMFLVLLLLTMPLTDG). The propeptide occupies 21–48 (FNIRATNGGELFGPVQRDAGNVLDHGFQ).

The protein belongs to the conotoxin L superfamily. In terms of processing, contains 2 disulfide bonds. Expressed by the venom duct.

The protein localises to the secreted. Increases calcium current amplitude through Cav1.2/Cav1.3 channels in rat pancreatic beta-cells, which is a prerequisite for eliciting insulin secretion. Stimulates insulin secretion in NIT-1 insulinoma cell lines. In vivo, significantly decreases mice blood glucose levels as of 45 minutes after treatment, similarly to insulin treatment. Has a potential therapeutic use in endocrinal pathologies such as early stages of type 2 diabetes where the pancreas's capability to produce insulin is still effective. This is Conotoxin Cl14.2b from Californiconus californicus (California cone).